The chain runs to 507 residues: ATP synthase subunit alpha, chloroplastic (507 aa).

170–177 provides a ligand contact to ATP; sequence GDRQTGKT.

This sequence belongs to the ATPase alpha/beta chains family. As to quaternary structure, F-type ATPases have 2 components, CF(1) - the catalytic core - and CF(0) - the membrane proton channel. CF(1) has five subunits: alpha(3), beta(3), gamma(1), delta(1), epsilon(1). CF(0) has four main subunits: a, b, b' and c.

Its subcellular location is the plastid. The protein localises to the chloroplast thylakoid membrane. The enzyme catalyses ATP + H2O + 4 H(+)(in) = ADP + phosphate + 5 H(+)(out). Produces ATP from ADP in the presence of a proton gradient across the membrane. The alpha chain is a regulatory subunit. This Lemna minor (Common duckweed) protein is ATP synthase subunit alpha, chloroplastic.